The sequence spans 269 residues: Eukaryotic translation initiation factor 3 subunit G-1 (269 aa).

Residues alanine 188–proline 266 enclose the RRM domain.

The protein belongs to the eIF-3 subunit G family. As to quaternary structure, component of the eukaryotic translation initiation factor 3 (eIF-3) complex. The eIF-3 complex interacts with pix.

The protein resides in the cytoplasm. Its function is as follows. RNA-binding component of the eukaryotic translation initiation factor 3 (eIF-3) complex, which is involved in protein synthesis of a specialized repertoire of mRNAs and, together with other initiation factors, stimulates binding of mRNA and methionyl-tRNAi to the 40S ribosome. The eIF-3 complex specifically targets and initiates translation of a subset of mRNAs involved in cell proliferation. This subunit can bind 18S rRNA. In Drosophila sechellia (Fruit fly), this protein is Eukaryotic translation initiation factor 3 subunit G-1.